The following is a 134-amino-acid chain: Psoriasis susceptibility 1 candidate gene 2 protein homolog (134 aa).

The N-terminal stretch at 1–21 (MLTWKLLGLLVLCLCAGGISG) is a signal peptide. A disordered region spans residues 18-134 (GISGNGDPSP…DLDPPQEEYR (117 aa)). 2 stretches are compositionally biased toward pro residues: residues 39–67 (PPLPLGPPIPGDPWPGAPPLFDEPPPPGS) and 81–98 (PPKPPSTDPPKPPLPDDP). Over residues 122–134 (EEPDLDPPQEEYR) the composition is skewed to acidic residues.

It localises to the secreted. The polypeptide is Psoriasis susceptibility 1 candidate gene 2 protein homolog (Psors1c2) (Mus musculus (Mouse)).